A 490-amino-acid chain; its full sequence is Protein nucleotidyltransferase YdiU (490 aa).

8 residues coordinate ATP: Gly92, Gly94, Arg95, Lys114, Asp126, Gly127, Arg177, and Arg184. Residue Asp256 is the Proton acceptor of the active site. Positions 257 and 266 each coordinate Mg(2+). Position 266 (Asp266) interacts with ATP.

The protein belongs to the SELO family. Mg(2+) serves as cofactor. Mn(2+) is required as a cofactor.

It catalyses the reaction L-seryl-[protein] + ATP = 3-O-(5'-adenylyl)-L-seryl-[protein] + diphosphate. It carries out the reaction L-threonyl-[protein] + ATP = 3-O-(5'-adenylyl)-L-threonyl-[protein] + diphosphate. The enzyme catalyses L-tyrosyl-[protein] + ATP = O-(5'-adenylyl)-L-tyrosyl-[protein] + diphosphate. The catalysed reaction is L-histidyl-[protein] + UTP = N(tele)-(5'-uridylyl)-L-histidyl-[protein] + diphosphate. It catalyses the reaction L-seryl-[protein] + UTP = O-(5'-uridylyl)-L-seryl-[protein] + diphosphate. It carries out the reaction L-tyrosyl-[protein] + UTP = O-(5'-uridylyl)-L-tyrosyl-[protein] + diphosphate. Nucleotidyltransferase involved in the post-translational modification of proteins. It can catalyze the addition of adenosine monophosphate (AMP) or uridine monophosphate (UMP) to a protein, resulting in modifications known as AMPylation and UMPylation. The sequence is that of Protein nucleotidyltransferase YdiU from Bordetella avium (strain 197N).